The chain runs to 374 residues: Peptide chain release factor 2 (374 aa).

Gln-252 carries the post-translational modification N5-methylglutamine.

The protein belongs to the prokaryotic/mitochondrial release factor family. In terms of processing, methylated by PrmC. Methylation increases the termination efficiency of RF2.

The protein resides in the cytoplasm. In terms of biological role, peptide chain release factor 2 directs the termination of translation in response to the peptide chain termination codons UGA and UAA. The protein is Peptide chain release factor 2 of Xanthomonas euvesicatoria pv. vesicatoria (strain 85-10) (Xanthomonas campestris pv. vesicatoria).